We begin with the raw amino-acid sequence, 366 residues long: Beta sliding clamp (366 aa).

The protein belongs to the beta sliding clamp family. As to quaternary structure, forms a ring-shaped head-to-tail homodimer around DNA which binds and tethers DNA polymerases and other proteins to the DNA. The DNA replisome complex has a single clamp-loading complex (3 tau and 1 each of delta, delta', psi and chi subunits) which binds 3 Pol III cores (1 core on the leading strand and 2 on the lagging strand) each with a beta sliding clamp dimer. Additional proteins in the replisome are other copies of gamma, psi and chi, Ssb, DNA helicase and RNA primase.

Its subcellular location is the cytoplasm. Functionally, confers DNA tethering and processivity to DNA polymerases and other proteins. Acts as a clamp, forming a ring around DNA (a reaction catalyzed by the clamp-loading complex) which diffuses in an ATP-independent manner freely and bidirectionally along dsDNA. Initially characterized for its ability to contact the catalytic subunit of DNA polymerase III (Pol III), a complex, multichain enzyme responsible for most of the replicative synthesis in bacteria; Pol III exhibits 3'-5' exonuclease proofreading activity. The beta chain is required for initiation of replication as well as for processivity of DNA replication. The protein is Beta sliding clamp (dnaN) of Buchnera aphidicola subsp. Acyrthosiphon pisum (strain APS) (Acyrthosiphon pisum symbiotic bacterium).